The chain runs to 629 residues: MFSRSILLRSVRKSLGRYYSSQAHPQTYIYNLLSDTKCRSCGIQLQDKFPDKPGYYRLPGQNDSNTDKKAKTSELNKKYEKILQNLDISDRNLLINNFSAPKQDDEKVASVPSLQQITPVEADTRDTTKDQQTHSGHSLSCKRCNDVIYNSKTRSIYDPNRDNLNKSEFPIPKLQQVLSTIPVDAPLVYVFSANDFPMGINKDIFQYRPPQQIYFVMTKSDILIPKTNVAFYNNFKKFLQNYMFKKFNVPRENVFIASGKDRWKMTDLYHFIPNYSYIIGDTNCGKSTLVKSLLINHHVKHWKYEALQQRPDEKQSSSASLKNKDFKKLDRLIDSFSSKNGPGTSHIPGFTRDVVPVDIDGIKELFDVPGFTTNENLQDIFDKLNHKQIARITKGANTSKYGSLKSKFDTVKNGQVLSLNGVGYLQFPGQDSMYQIRNVTKFALHKFKNLEKVDSILQRNEIPKSMSSHFIVNRQQQQQQRNELRGYYKRYIIPPFYGTIDLVIKDIGYINIKPTGKKLTNELMVLYLHPSLEAIIRQPILNYIDSPTPKKSPDGTNRKTITSDISKTPFYSRLIPSTVLSDPSSLVLSPPSSDYNQLNQYLQIDESSESAYNDLLELDETNKYDYWIE.

A mitochondrion-targeting transit peptide spans 1-19; it reads MFSRSILLRSVRKSLGRYY. The tract at residues 52-71 is disordered; that stretch reads KPGYYRLPGQNDSNTDKKAK. The region spanning 171–374 is the CP-type G domain; the sequence is IPKLQQVLST…LFDVPGFTTN (204 aa).

Belongs to the TRAFAC class YlqF/YawG GTPase family. GEP3 subfamily.

It localises to the mitochondrion. Its function is as follows. May be involved in the mitochondrial lipid metabolism. The sequence is that of Genetic interactor of prohibitins 3, mitochondrial (GEP3) from Candida albicans (strain SC5314 / ATCC MYA-2876) (Yeast).